We begin with the raw amino-acid sequence, 145 residues long: Large ribosomal subunit protein uL11 (145 aa).

Belongs to the universal ribosomal protein uL11 family. Part of the ribosomal stalk of the 50S ribosomal subunit. Interacts with L10 and the large rRNA to form the base of the stalk. L10 forms an elongated spine to which L12 dimers bind in a sequential fashion forming a multimeric L10(L12)X complex. Post-translationally, one or more lysine residues are methylated.

Functionally, forms part of the ribosomal stalk which helps the ribosome interact with GTP-bound translation factors. The protein is Large ribosomal subunit protein uL11 of Rickettsia felis (strain ATCC VR-1525 / URRWXCal2) (Rickettsia azadi).